The sequence spans 326 residues: Fructose-1,6-bisphosphatase class 1 (326 aa).

Belongs to the FBPase class 1 family. As to quaternary structure, homotetramer.

The protein localises to the cytoplasm. It catalyses the reaction beta-D-fructose 1,6-bisphosphate + H2O = beta-D-fructose 6-phosphate + phosphate. It participates in carbohydrate biosynthesis; gluconeogenesis. In Methylobacterium sp. (strain 4-46), this protein is Fructose-1,6-bisphosphatase class 1.